The following is a 238-amino-acid chain: Ribonuclease PH (238 aa).

Phosphate-binding positions include R86 and 124–126 (GTR).

Belongs to the RNase PH family. In terms of assembly, homohexameric ring arranged as a trimer of dimers.

It carries out the reaction tRNA(n+1) + phosphate = tRNA(n) + a ribonucleoside 5'-diphosphate. In terms of biological role, phosphorolytic 3'-5' exoribonuclease that plays an important role in tRNA 3'-end maturation. Removes nucleotide residues following the 3'-CCA terminus of tRNAs; can also add nucleotides to the ends of RNA molecules by using nucleoside diphosphates as substrates, but this may not be physiologically important. Probably plays a role in initiation of 16S rRNA degradation (leading to ribosome degradation) during starvation. This is Ribonuclease PH from Chelativorans sp. (strain BNC1).